Consider the following 171-residue polypeptide: 6,7-dimethyl-8-ribityllumazine synthase (171 aa).

5-amino-6-(D-ribitylamino)uracil is bound by residues Phe24, 58 to 60, and 82 to 84; these read ALE and AVI. (2S)-2-hydroxy-3-oxobutyl phosphate is bound at residue 87–88; sequence ET. His90 (proton donor) is an active-site residue. Residue Asn115 coordinates 5-amino-6-(D-ribitylamino)uracil. Arg129 contacts (2S)-2-hydroxy-3-oxobutyl phosphate. The tract at residues 150-171 is disordered; the sequence is ALDQLGDDEDEEEDEEDEEERA. Positions 154–171 are enriched in acidic residues; sequence LGDDEDEEEDEEDEEERA.

It belongs to the DMRL synthase family.

It carries out the reaction (2S)-2-hydroxy-3-oxobutyl phosphate + 5-amino-6-(D-ribitylamino)uracil = 6,7-dimethyl-8-(1-D-ribityl)lumazine + phosphate + 2 H2O + H(+). It functions in the pathway cofactor biosynthesis; riboflavin biosynthesis; riboflavin from 2-hydroxy-3-oxobutyl phosphate and 5-amino-6-(D-ribitylamino)uracil: step 1/2. Catalyzes the formation of 6,7-dimethyl-8-ribityllumazine by condensation of 5-amino-6-(D-ribitylamino)uracil with 3,4-dihydroxy-2-butanone 4-phosphate. This is the penultimate step in the biosynthesis of riboflavin. The polypeptide is 6,7-dimethyl-8-ribityllumazine synthase (Burkholderia ambifaria (strain ATCC BAA-244 / DSM 16087 / CCUG 44356 / LMG 19182 / AMMD) (Burkholderia cepacia (strain AMMD))).